We begin with the raw amino-acid sequence, 906 residues long: Protein translocase subunit SecA (906 aa).

ATP contacts are provided by residues Gln86, 104–108 (GEGKT), and Asp499. Basic and acidic residues predominate over residues 834–847 (KLQKNMRESREDPA). The tract at residues 834 to 887 (KLQKNMRESREDPAFSKYNAGSSLETDLKPVVSRVDPKDRNPDDPTSWGRVSRN) is disordered. Zn(2+) is bound by residues Cys890, Cys892, Cys901, and His902.

Belongs to the SecA family. As to quaternary structure, monomer and homodimer. Part of the essential Sec protein translocation apparatus which comprises SecA, SecYEG and auxiliary proteins SecDF-YajC and YidC. Requires Zn(2+) as cofactor.

It is found in the cell inner membrane. It localises to the cytoplasm. It catalyses the reaction ATP + H2O + cellular proteinSide 1 = ADP + phosphate + cellular proteinSide 2.. Part of the Sec protein translocase complex. Interacts with the SecYEG preprotein conducting channel. Has a central role in coupling the hydrolysis of ATP to the transfer of proteins into and across the cell membrane, serving both as a receptor for the preprotein-SecB complex and as an ATP-driven molecular motor driving the stepwise translocation of polypeptide chains across the membrane. This Rickettsia felis (strain ATCC VR-1525 / URRWXCal2) (Rickettsia azadi) protein is Protein translocase subunit SecA.